The following is a 3122-amino-acid chain: Abnormal spindle-like microcephaly-associated protein homolog (3122 aa).

Disordered regions lie at residues 1–26 (MATM…AGDP) and 139–169 (KRSL…NESF). Residues 10–21 (PEERGRRARPDP) are compositionally biased toward basic and acidic residues. Residues 289 to 388 (STQTQIHFLS…KDSMGHVGQQ (100 aa)) form a sufficient for interaction with KATNA1:KATNB1 region. Residues serine 348, serine 373, and serine 573 each carry the phosphoserine modification. Positions 579–600 (PSTVARTTKKEGHTSKRISSLE) are disordered. Residues 888 to 1024 (KASKELLLAF…LLWKIALAFQ (137 aa)) form the Calponin-homology (CH) 1 domain. Residues 1025–1045 (VDISLNLDQLKEEIDFLKHTH) adopt a coiled-coil conformation. Serine 1071 carries the post-translational modification Phosphoserine. The 152-residue stretch at 1078 to 1229 (GDSVQLLMDW…YLSFLCARLL (152 aa)) folds into the Calponin-homology (CH) 2 domain. 32 consecutive IQ domains span residues 1234–1263 (EIRA…RDKA), 1315–1346 (QNKS…VILQ), 1410–1439 (QTKA…VVIQ), 1504–1535 (KRAA…CVLQ), 1550–1579 (LKKM…AAIT), 1600–1629 (TRSS…SVIK), 1623–1652 (ALAS…ATIK), 1696–1725 (VRES…AAIS), 1719–1750 (QCKA…LVIQ), 1769–1798 (VKRA…AAVT), 1792–1821 (QSTA…SAVK), 1842–1871 (TREA…AAVK), 1865–1896 (QHEA…AVIQ), 1915–1946 (LRHA…ALIQ), 1938–1967 (QHQC…AALQ), 1988–2017 (TKAA…AAVT), 2011–2042 (CHKA…IVIQ), 2061–2092 (LRRA…TLIE), 2134–2165 (TLKA…TLIQ), 2157–2188 (MHFA…TMVQ), 2207–2238 (LRRS…TLIQ), 2230–2261 (MHLA…IWIQ), 2279–2310 (LEKA…TVIQ), 2302–2333 (MHRA…VVIQ), 2343–2374 (QKHA…TLIQ), 2366–2397 (MHSS…IFVQ), 2416–2447 (LRKA…ALIQ), 2491–2522 (QHSA…KVIQ), 2602–2633 (KVEA…NIIE), 2674–2705 (RHRA…LIIQ), 2724–2755 (LKKS…RLFH), and 2849–2880 (ITSC…IRRS).

In terms of assembly, interacts with KATNA1 and KATNB1; katanin complex formation KATNA1:KATNB1 is required for the association. Expressed in fetal brain, peripheral nervous system, liver and spleen. In the adult, expressed exclusively in testis, ovary and spleen.

It is found in the cytoplasm. Its subcellular location is the cytoskeleton. It localises to the spindle. The protein localises to the nucleus. Functionally, involved in mitotic spindle regulation and coordination of mitotic processes. The function in regulating microtubule dynamics at spindle poles including spindle orientation, astral microtubule density and poleward microtubule flux seem to depend on its association with the katanin complex formed by KATNA1 and KATNB1. Enhances the microtubule lattice severing activity of KATNA1 by recruiting the katanin complex to microtubules. Can block microtubule minus-end growth and reversely this function can be enhanced by the katanin complex. May have a preferential role in regulating neurogenesis. The chain is Abnormal spindle-like microcephaly-associated protein homolog (Aspm) from Mus musculus (Mouse).